The following is a 134-amino-acid chain: MSTTFCSSVSMQATSLAATTRISFQKPGLVSRTNLSFNLRRSIPTRLSVSCAAKPETVEKVSKIVKKQLSLKDDQKVVAETKFADLGADSLDTVEIVMGLEEEFDIEMAEEKAQKIATVEEAAELIEELVQAKK.

A chloroplast-targeting transit peptide spans Met1–Cys51. The Carrier domain occupies Pro55 to Val130. Ser90 is modified (O-(pantetheine 4'-phosphoryl)serine).

This sequence belongs to the acyl carrier protein (ACP) family. In terms of processing, 4'-phosphopantetheine is transferred from CoA to a specific serine of apo-ACP by acpS. This modification is essential for activity because fatty acids are bound in thioester linkage to the sulfhydryl of the prosthetic group. In terms of tissue distribution, seed.

It is found in the plastid. The protein localises to the chloroplast. The protein operates within lipid metabolism; fatty acid biosynthesis. Its function is as follows. Carrier of the growing fatty acid chain in fatty acid biosynthesis. The protein is Acyl carrier protein, chloroplastic (ACL1.A2) of Brassica napus (Rape).